A 130-amino-acid polypeptide reads, in one-letter code: Small ribosomal subunit protein uS9 (130 aa).

The interval Ala-101 to Arg-130 is disordered. A compositionally biased stretch (basic residues) spans Lys-111–Arg-130.

This sequence belongs to the universal ribosomal protein uS9 family.

The chain is Small ribosomal subunit protein uS9 from Levilactobacillus brevis (strain ATCC 367 / BCRC 12310 / CIP 105137 / JCM 1170 / LMG 11437 / NCIMB 947 / NCTC 947) (Lactobacillus brevis).